The following is a 265-amino-acid chain: O-methyltransferase NEC2 (265 aa).

The protein belongs to the methyltransferase superfamily.

The enzyme catalyses desmethylnectriapyrone + S-adenosyl-L-methionine = nectriapyrone + S-adenosyl-L-homocysteine + H(+). In terms of biological role, O-methyltransferase; part of the gene cluster that mediates the biosynthesis of nectriapyrone and its analogs phomopyrone A, acropyrone and zaepyrone. The nectriapyrone biosynthetic gene cluster consists of two genes, the highly reducing polyketide synthase NEC1 that produces a demethylated analog of nectriapyrone from one unit of acetyl-CoA and one unit of malonyl-CoA; and the O-methyltransferase NEC2 that further methylates the NEC1 product to yield nectriapyrone. Nectriapyrone is further hydrolyzed to nectriapyrone D, also known as gulypyrone B, by an unidentified hydrolase localized outside the nectriapyrone cluster. The chain is O-methyltransferase NEC2 from Pyricularia oryzae (strain 70-15 / ATCC MYA-4617 / FGSC 8958) (Rice blast fungus).